The chain runs to 802 residues: MAKRSSLSIRIVEGKNLPAKDITGSSDPYCIVKVDNEPIIRTATVWKTLCPFWGEDYQVHLPPTFHTVAFYVMDEDALSRDDVIGKVCLTRDALASHPKGFSGWTHLVEVDPNEEVQGEIHLRLEVVPGVHASRLRCAVLEARDLAPKDRNGASDPFVRVHYNGRTQETSVVKKSCYPRWNETFDFELEKGASEALLVEAWDWDLVSRNDFLGKVAVNVQRLCSAQQEEGWFRLQPDQSKSRQGKGNLGSLQLEVRLRDETVLPSVCYQPLVQLLCQEVKLGTQGPGRLIPVIEETTSAECRQEVATTLLKLFLGQGLAKDFLDLLFQLELGRTSEANTLFRSNSLASKSMESFLKVAGMRYLHGILGPIIDRVFEEKKYVELDPSKVEVKDVGCSGLHRPQTEAEVLEQSAQTLRAHLVALLSAICRSVRTCPAIIRATFRQLFRRVRERFPNAQHQNVPFIAVTSFLCLRFFSPAILSPKLFHLRERHADARTSRTLLLLAKAVQNIGNMDTPVSRAKESWMEPLQPTVRQGVAQLKDFIMKLVDIEEKEELDLQRALNSQAPPVKEGPLFIHRTKGKGPLASSSFKKLYFSLTTEALSFAKTSSSKKSTFIKLASIRAAEKVEEKSFGSSHIMQVIYADDVGRAQTVYLQCKCVNELNQWLSALRKASTNNRGLLRSYHPGIFRGDKWSCCHQKDKTDQGCDKTHSRVTLQEWNDPLDHDLEAQLIYRHLLGVEAALRERYQLLRGATEAGVSPTGCDGAPEDSLAQLLRVLQDLREAHGSSLASPAAREPHHLLELQT.

C2 domains are found at residues 1-105 and 116-232; these read MAKR…SGWT and VQGE…EGWF. Ca(2+)-binding residues include Asp-21, Asp-27, Asp-74, Asp-76, Ser-79, Asp-82, Asp-149, Asp-155, Asp-202, Asp-204, Ser-207, and Asp-210. Residues 317-545 form the Ras-GAP domain; sequence GLAKDFLDLL…AQLKDFIMKL (229 aa). The region spanning 565-672 is the PH domain; sequence PPVKEGPLFI…WLSALRKAST (108 aa). The Btk-type zinc-finger motif lies at 674-710; sequence NRGLLRSYHPGIFRGDKWSCCHQKDKTDQGCDKTHSR. Positions 682, 693, 694, and 704 each coordinate Zn(2+).

Requires Ca(2+) as cofactor. Isoform 2 is expressed in osteoblasts.

It is found in the cytoplasm. The protein localises to the cytosol. Its subcellular location is the cell membrane. Its function is as follows. Ca(2+)-dependent Ras GTPase-activating protein, that switches off the Ras-MAPK pathway following a stimulus that elevates intracellular calcium. Functions as an adaptor for Cdc42 and Rac1 during FcR-mediated phagocytosis. Isoform 2 activates the Ras pathway and promotes RANKL shedding by modulating the expression of MMP14. In Mus musculus (Mouse), this protein is Ras GTPase-activating protein 4 (Rasa4).